We begin with the raw amino-acid sequence, 232 residues long: Ubiquinone biosynthesis O-methyltransferase (232 aa).

The S-adenosyl-L-methionine site is built by Arg36, Gly55, Asp76, and Leu120.

Belongs to the methyltransferase superfamily. UbiG/COQ3 family.

It catalyses the reaction a 3-demethylubiquinol + S-adenosyl-L-methionine = a ubiquinol + S-adenosyl-L-homocysteine + H(+). It carries out the reaction a 3-(all-trans-polyprenyl)benzene-1,2-diol + S-adenosyl-L-methionine = a 2-methoxy-6-(all-trans-polyprenyl)phenol + S-adenosyl-L-homocysteine + H(+). The protein operates within cofactor biosynthesis; ubiquinone biosynthesis. O-methyltransferase that catalyzes the 2 O-methylation steps in the ubiquinone biosynthetic pathway. The chain is Ubiquinone biosynthesis O-methyltransferase from Pseudomonas aeruginosa (strain UCBPP-PA14).